A 432-amino-acid polypeptide reads, in one-letter code: Adenylosuccinate synthetase (432 aa).

GTP is bound by residues Gly11 to Lys17 and Gly39 to Thr41. Catalysis depends on Asp12, which acts as the Proton acceptor. The Mg(2+) site is built by Asp12 and Gly39. Residues Asp12 to Lys15, Asn37 to His40, Thr134, Arg148, Asn230, Thr245, and Arg309 contribute to the IMP site. The active-site Proton donor is His40. Val305–Arg311 contacts substrate. GTP-binding positions include Arg311, Lys337 to Asp339, and Gly419 to Gly421.

It belongs to the adenylosuccinate synthetase family. In terms of assembly, homodimer. Mg(2+) is required as a cofactor.

The protein localises to the cytoplasm. It carries out the reaction IMP + L-aspartate + GTP = N(6)-(1,2-dicarboxyethyl)-AMP + GDP + phosphate + 2 H(+). The protein operates within purine metabolism; AMP biosynthesis via de novo pathway; AMP from IMP: step 1/2. Functionally, plays an important role in the de novo pathway and in the salvage pathway of purine nucleotide biosynthesis. Catalyzes the first committed step in the biosynthesis of AMP from IMP. This Vanderwaltozyma polyspora (strain ATCC 22028 / DSM 70294 / BCRC 21397 / CBS 2163 / NBRC 10782 / NRRL Y-8283 / UCD 57-17) (Kluyveromyces polysporus) protein is Adenylosuccinate synthetase.